Here is a 379-residue protein sequence, read N- to C-terminus: tRNA-specific 2-thiouridylase MnmA (379 aa).

ATP contacts are provided by residues alanine 9–serine 16 and methionine 35. The interval asparagine 94–aspartate 96 is interaction with target base in tRNA. Residue cysteine 99 is the Nucleophile of the active site. A disulfide bridge links cysteine 99 with cysteine 195. Glycine 123 contributes to the ATP binding site. An interaction with tRNA region spans residues lysine 145–glutamine 147. Cysteine 195 (cysteine persulfide intermediate) is an active-site residue. The interaction with tRNA stretch occupies residues arginine 307–tyrosine 308.

The protein belongs to the MnmA/TRMU family.

Its subcellular location is the cytoplasm. It carries out the reaction S-sulfanyl-L-cysteinyl-[protein] + uridine(34) in tRNA + AH2 + ATP = 2-thiouridine(34) in tRNA + L-cysteinyl-[protein] + A + AMP + diphosphate + H(+). Catalyzes the 2-thiolation of uridine at the wobble position (U34) of tRNA, leading to the formation of s(2)U34. This Xylella fastidiosa (strain 9a5c) protein is tRNA-specific 2-thiouridylase MnmA.